A 5085-amino-acid polypeptide reads, in one-letter code: Linear gramicidin synthase subunit D (5085 aa).

4 consecutive Carrier domains span residues 962 to 1037, 2023 to 2097, 3544 to 3619, and 4601 to 4676; these read APRT…AAAG, SPST…EEKA, APRN…ELLT, and APQT…EEII. O-(pantetheine 4'-phosphoryl)serine occurs at positions 997, 2058, 3579, and 4636.

Belongs to the ATP-dependent AMP-binding enzyme family. As to quaternary structure, large multienzyme complex composed of 4 subunits; LgrA, LgrB, LgrC and LgrD. The cofactor is pantetheine 4'-phosphate.

Functionally, activates the 13th to the 16th (Trp, D-Leu, Trp and Gly) amino acids in linear gramicidin and catalyzes the formation of the peptide bond between them. This enzyme is also responsible for the epimerization of the 14th (D-Leu) amino acid. It also catalyzes the NAD(P)H-dependent reduction of the C-terminal glycine residue of the N-formylated 16-mer peptide, that binds to the peptidyl carrier domain of the terminal module of this protein, to form a peptidyl-aldehyde intermediate that is released from the enzyme complex. The chain is Linear gramicidin synthase subunit D (lgrD) from Brevibacillus parabrevis.